The primary structure comprises 337 residues: Glyceraldehyde-3-phosphate dehydrogenase 1, cytosolic (337 aa).

NAD(+) contacts are provided by residues 13–14, aspartate 35, and arginine 82; that span reads RI. Residues 153-155, threonine 184, 213-214, and arginine 236 contribute to the D-glyceraldehyde 3-phosphate site; these read SCT and TG. The active-site Nucleophile is the cysteine 154. Residue asparagine 318 participates in NAD(+) binding.

Belongs to the glyceraldehyde-3-phosphate dehydrogenase family. Homotetramer. Post-translationally, phosphorylated after gibberellin treatment.

The protein localises to the cytoplasm. It catalyses the reaction D-glyceraldehyde 3-phosphate + phosphate + NAD(+) = (2R)-3-phospho-glyceroyl phosphate + NADH + H(+). The protein operates within carbohydrate degradation; glycolysis; pyruvate from D-glyceraldehyde 3-phosphate: step 1/5. In terms of biological role, key enzyme in glycolysis that catalyzes the first step of the pathway by converting D-glyceraldehyde 3-phosphate (G3P) into 3-phospho-D-glyceroyl phosphate. Essential for the maintenance of cellular ATP levels and carbohydrate metabolism. This Oryza sativa subsp. japonica (Rice) protein is Glyceraldehyde-3-phosphate dehydrogenase 1, cytosolic (GAPC1).